We begin with the raw amino-acid sequence, 151 residues long: Small ribosomal subunit protein uS9 (151 aa).

The protein belongs to the universal ribosomal protein uS9 family.

The polypeptide is Small ribosomal subunit protein uS9 (rps9) (Aeropyrum pernix (strain ATCC 700893 / DSM 11879 / JCM 9820 / NBRC 100138 / K1)).